The primary structure comprises 267 residues: Hydroxyethylthiazole kinase (267 aa).

M46 contributes to the substrate binding site. Positions 122 and 168 each coordinate ATP. A substrate-binding site is contributed by G195.

This sequence belongs to the Thz kinase family. The cofactor is Mg(2+).

The enzyme catalyses 5-(2-hydroxyethyl)-4-methylthiazole + ATP = 4-methyl-5-(2-phosphooxyethyl)-thiazole + ADP + H(+). It functions in the pathway cofactor biosynthesis; thiamine diphosphate biosynthesis; 4-methyl-5-(2-phosphoethyl)-thiazole from 5-(2-hydroxyethyl)-4-methylthiazole: step 1/1. Catalyzes the phosphorylation of the hydroxyl group of 4-methyl-5-beta-hydroxyethylthiazole (THZ). This chain is Hydroxyethylthiazole kinase, found in Moorella thermoacetica (strain ATCC 39073 / JCM 9320).